The sequence spans 88 residues: UPF0237 protein SMU_72 (88 aa).

One can recognise an ACT domain in the interval 4-77; the sequence is IITVVGKDRT…ETLNVKINIQ (74 aa).

The protein belongs to the UPF0237 family. Homodimer.

This is UPF0237 protein SMU_72 from Streptococcus mutans serotype c (strain ATCC 700610 / UA159).